Here is a 700-residue protein sequence, read N- to C-terminus: Elongation factor G (700 aa).

Residues Glu8–Val290 form the tr-type G domain. GTP-binding positions include Ala17 to Thr24, Asp88 to His92, and Asn142 to Asp145.

This sequence belongs to the TRAFAC class translation factor GTPase superfamily. Classic translation factor GTPase family. EF-G/EF-2 subfamily.

It is found in the cytoplasm. Catalyzes the GTP-dependent ribosomal translocation step during translation elongation. During this step, the ribosome changes from the pre-translocational (PRE) to the post-translocational (POST) state as the newly formed A-site-bound peptidyl-tRNA and P-site-bound deacylated tRNA move to the P and E sites, respectively. Catalyzes the coordinated movement of the two tRNA molecules, the mRNA and conformational changes in the ribosome. The protein is Elongation factor G of Leptothrix cholodnii (strain ATCC 51168 / LMG 8142 / SP-6) (Leptothrix discophora (strain SP-6)).